The primary structure comprises 199 residues: Gene 66 protein (199 aa).

This Mycobacterium (Mycobacteriophage D29) protein is Gene 66 protein (66).